The chain runs to 400 residues: Argininosuccinate synthase (400 aa).

ATP-binding positions include 10 to 18 (AYSGGVDTS) and alanine 38. Tyrosine 89 provides a ligand contact to L-citrulline. Residue glycine 119 participates in ATP binding. Residues threonine 121, asparagine 125, and aspartate 126 each coordinate L-aspartate. Asparagine 125 is an L-citrulline binding site. L-citrulline is bound by residues arginine 129, serine 177, serine 186, glutamate 262, and tyrosine 274.

This sequence belongs to the argininosuccinate synthase family. Type 1 subfamily. In terms of assembly, homotetramer.

Its subcellular location is the cytoplasm. The catalysed reaction is L-citrulline + L-aspartate + ATP = 2-(N(omega)-L-arginino)succinate + AMP + diphosphate + H(+). Its pathway is amino-acid biosynthesis; L-arginine biosynthesis; L-arginine from L-ornithine and carbamoyl phosphate: step 2/3. The protein is Argininosuccinate synthase of Prochlorococcus marinus (strain NATL2A).